The primary structure comprises 214 residues: ATP phosphoribosyltransferase (214 aa).

It belongs to the ATP phosphoribosyltransferase family. Short subfamily. Heteromultimer composed of HisG and HisZ subunits.

The protein localises to the cytoplasm. It carries out the reaction 1-(5-phospho-beta-D-ribosyl)-ATP + diphosphate = 5-phospho-alpha-D-ribose 1-diphosphate + ATP. The protein operates within amino-acid biosynthesis; L-histidine biosynthesis; L-histidine from 5-phospho-alpha-D-ribose 1-diphosphate: step 1/9. Functionally, catalyzes the condensation of ATP and 5-phosphoribose 1-diphosphate to form N'-(5'-phosphoribosyl)-ATP (PR-ATP). Has a crucial role in the pathway because the rate of histidine biosynthesis seems to be controlled primarily by regulation of HisG enzymatic activity. The protein is ATP phosphoribosyltransferase (hisG) of Aquifex aeolicus (strain VF5).